Consider the following 910-residue polypeptide: Valine--tRNA ligase (910 aa).

The 'HIGH' region motif lies at Pro-45–His-55. The 'KMSKS' region motif lies at Lys-554–Ser-558. Lys-557 is an ATP binding site. The stretch at Asp-842 to Ser-910 forms a coiled coil.

Belongs to the class-I aminoacyl-tRNA synthetase family. ValS type 1 subfamily. As to quaternary structure, monomer.

The protein localises to the cytoplasm. It carries out the reaction tRNA(Val) + L-valine + ATP = L-valyl-tRNA(Val) + AMP + diphosphate. Its function is as follows. Catalyzes the attachment of valine to tRNA(Val). As ValRS can inadvertently accommodate and process structurally similar amino acids such as threonine, to avoid such errors, it has a 'posttransfer' editing activity that hydrolyzes mischarged Thr-tRNA(Val) in a tRNA-dependent manner. In Brucella suis biovar 1 (strain 1330), this protein is Valine--tRNA ligase.